The following is a 577-amino-acid chain: Autophagy-related protein 20 (577 aa).

The interval 57 to 81 (GQSYVAPHSGGGRTSSGSSSSASLQ) is disordered. A PX domain is found at 95 to 239 (GEQGRVRILE…DFLDPNNANW (145 aa)). A 1,2-diacyl-sn-glycero-3-phospho-(1D-myo-inositol-3-phosphate)-binding residues include R131, S133, K157, and R205.

It belongs to the sorting nexin family.

Its subcellular location is the endosome membrane. The protein resides in the preautophagosomal structure membrane. In terms of biological role, required for cytoplasm to vacuole transport (Cvt), pexophagy and mitophagy. Also involved in endoplasmic reticulum-specific autophagic process and is essential for the survival of cells subjected to severe ER stress. Functions in protein retrieval from the endocytic pathway. The polypeptide is Autophagy-related protein 20 (ATG20) (Eremothecium gossypii (strain ATCC 10895 / CBS 109.51 / FGSC 9923 / NRRL Y-1056) (Yeast)).